The following is an 838-amino-acid chain: Translation initiation factor IF-2 (838 aa).

Residues 50 to 108 (VQSGKKPESPEKKDIKQNTQKEAPETQTQQKPIEQEVETKQNIDSTPIKVEPKQESLAS) form a disordered region. Residues 54–65 (KKPESPEKKDIK) show a composition bias toward basic and acidic residues. Positions 66 to 81 (QNTQKEAPETQTQQKP) are enriched in polar residues. Residues 337–506 (SRAPVVTIMG…LLQAELLELK (170 aa)) form the tr-type G domain. Residues 346–353 (GHVDHGKT) are G1. 346-353 (GHVDHGKT) is a GTP binding site. The segment at 371 to 375 (GITQH) is G2. The segment at 392–395 (DTPG) is G3. GTP is bound by residues 392-396 (DTPGH) and 446-449 (NKMD). The interval 446–449 (NKMD) is G4. The tract at residues 482 to 484 (SAK) is G5.

This sequence belongs to the TRAFAC class translation factor GTPase superfamily. Classic translation factor GTPase family. IF-2 subfamily.

It localises to the cytoplasm. One of the essential components for the initiation of protein synthesis. Protects formylmethionyl-tRNA from spontaneous hydrolysis and promotes its binding to the 30S ribosomal subunits. Also involved in the hydrolysis of GTP during the formation of the 70S ribosomal complex. The chain is Translation initiation factor IF-2 from Campylobacter fetus subsp. fetus (strain 82-40).